The chain runs to 170 residues: Urease accessory protein UreE (170 aa).

The disordered stretch occupies residues 144-170 (GGHSHDDHDHHHGHHEHDHEHHHHHHD). Basic and acidic residues predominate over residues 146-162 (HSHDDHDHHHGHHEHDH).

This sequence belongs to the UreE family.

The protein resides in the cytoplasm. Involved in urease metallocenter assembly. Binds nickel. Probably functions as a nickel donor during metallocenter assembly. The sequence is that of Urease accessory protein UreE from Brucella anthropi (strain ATCC 49188 / DSM 6882 / CCUG 24695 / JCM 21032 / LMG 3331 / NBRC 15819 / NCTC 12168 / Alc 37) (Ochrobactrum anthropi).